Consider the following 483-residue polypeptide: Glutamate--tRNA ligase (483 aa).

A 'HIGH' region motif is present at residues 9–19; the sequence is PSPTGFLHIGN. Residues 253 to 257 carry the 'KMSKS' region motif; sequence KLSKR. K256 is an ATP binding site.

It belongs to the class-I aminoacyl-tRNA synthetase family. Glutamate--tRNA ligase type 1 subfamily. As to quaternary structure, monomer.

It localises to the cytoplasm. The enzyme catalyses tRNA(Glu) + L-glutamate + ATP = L-glutamyl-tRNA(Glu) + AMP + diphosphate. Catalyzes the attachment of glutamate to tRNA(Glu) in a two-step reaction: glutamate is first activated by ATP to form Glu-AMP and then transferred to the acceptor end of tRNA(Glu). The protein is Glutamate--tRNA ligase of Mycoplasma mycoides subsp. mycoides SC (strain CCUG 32753 / NCTC 10114 / PG1).